The following is a 692-amino-acid chain: Elongation factor G (692 aa).

The tr-type G domain maps to 8 to 283 (NRIRNIGIAA…AVIDYLPAPT (276 aa)). GTP is bound by residues 17-24 (AHIDAGKT), 81-85 (DTPGH), and 135-138 (NKMD).

The protein belongs to the TRAFAC class translation factor GTPase superfamily. Classic translation factor GTPase family. EF-G/EF-2 subfamily.

It is found in the cytoplasm. Its function is as follows. Catalyzes the GTP-dependent ribosomal translocation step during translation elongation. During this step, the ribosome changes from the pre-translocational (PRE) to the post-translocational (POST) state as the newly formed A-site-bound peptidyl-tRNA and P-site-bound deacylated tRNA move to the P and E sites, respectively. Catalyzes the coordinated movement of the two tRNA molecules, the mRNA and conformational changes in the ribosome. The protein is Elongation factor G of Helicobacter pylori (strain HPAG1).